The following is a 221-amino-acid chain: Ras-related protein Rab-27A (221 aa).

Serine 2 is modified (N-acetylserine). Serine 2 carries the phosphoserine modification. A GTP-binding site is contributed by 16-24 (GDSGVGKTS). The Effector region motif lies at 38-46 (FITTVGIDF). GTP-binding positions include 74–78 (DTAGQ), 133–136 (NKSD), and 163–165 (SAA). Cysteine 123 and cysteine 188 are joined by a disulfide. Residues cysteine 219 and cysteine 221 are each lipidated (S-geranylgeranyl cysteine). Residue cysteine 221 is modified to Cysteine methyl ester.

The protein belongs to the small GTPase superfamily. Rab family. In terms of assembly, binds SYTL1, SLAC2B, MYRIP, SYTL3, SYTL4 and SYTL5. Interacts with RPH3A and RPH3A. Binds MLPH and SYTL2. Interacts with UNC13D. Does not interact with the BLOC-3 complex (heterodimer of HPS1 and HPS4). Interacts (GDP-bound form preferentially) with DENND10. As to expression, high levels in eye, intestine, lung, pancreas and spleen, and low or absent in brain, liver, heart, kidney, and skeletal muscle.

It is found in the membrane. It localises to the melanosome. The protein resides in the late endosome. The protein localises to the lysosome. The catalysed reaction is GTP + H2O = GDP + phosphate + H(+). Regulated by guanine nucleotide exchange factors (GEFs) which promote the exchange of bound GDP for free GTP, GTPase activating proteins (GAPs) which increase the GTP hydrolysis activity, and GDP dissociation inhibitors which inhibit the dissociation of the nucleotide from the GTPase. Activated by GEFs such as DENND10. Functionally, small GTPase which cycles between active GTP-bound and inactive GDP-bound states. In its active state, binds to a variety of effector proteins to regulate homeostasis of late endocytic pathway, including endosomal positioning, maturation and secretion. Plays a role in cytotoxic granule exocytosis in lymphocytes. Required for both granule maturation and granule docking and priming at the immunologic synapse. The protein is Ras-related protein Rab-27A (Rab27a) of Rattus norvegicus (Rat).